The sequence spans 343 residues: Glyceraldehyde-3-phosphate dehydrogenase (343 aa).

Residues 13-14 and glycine 111 contribute to the NAD(+) site; that span reads TI. A D-glyceraldehyde 3-phosphate-binding site is contributed by 140-142; that stretch reads SCN. The active-site Nucleophile is cysteine 141. Arginine 169 contributes to the NAD(+) binding site. 195 to 196 is a binding site for D-glyceraldehyde 3-phosphate; it reads HA. Residue glutamine 303 coordinates NAD(+).

The protein belongs to the glyceraldehyde-3-phosphate dehydrogenase family. As to quaternary structure, homotetramer.

The protein resides in the cytoplasm. The catalysed reaction is D-glyceraldehyde 3-phosphate + phosphate + NADP(+) = (2R)-3-phospho-glyceroyl phosphate + NADPH + H(+). The enzyme catalyses D-glyceraldehyde 3-phosphate + phosphate + NAD(+) = (2R)-3-phospho-glyceroyl phosphate + NADH + H(+). It participates in carbohydrate degradation; glycolysis; pyruvate from D-glyceraldehyde 3-phosphate: step 1/5. The polypeptide is Glyceraldehyde-3-phosphate dehydrogenase (Sulfolobus acidocaldarius (strain ATCC 33909 / DSM 639 / JCM 8929 / NBRC 15157 / NCIMB 11770)).